Here is a 336-residue protein sequence, read N- to C-terminus: Protein phosphatase 1 regulatory subunit pprA (336 aa).

A compositionally biased stretch (low complexity) spans 1 to 10; sequence MSEQNTIINS. A disordered region spans residues 1–24; it reads MSEQNTIINSEEIKENEKIESETE. Over residues 11-21 the composition is skewed to basic and acidic residues; sequence EEIKENEKIES. LRR repeat units follow at residues 26 to 47, 49 to 70, 71 to 92, 93 to 114, 115 to 136, 139 to 160, 161 to 182, 183 to 204, 205 to 225, 229 to 250, 251 to 272, and 273 to 294; these read PITY…YNIP, TLLD…NHLK, NLKK…DQLK, ELES…KDFQ, SLTY…SIKD, KIKE…QELV, PIKN…ENLV, NIET…NHLS, HLRI…KGLV, CLEE…QSLK, QLRT…NELP, and DLDE…EQQV. In terms of domain architecture, LRRCT spans 306 to 336; it reads NPVATHVQYRRMFINMFPQLKQLDATMVKRN.

Belongs to the SDS22 family.

The protein resides in the nucleus. Its function is as follows. Regulatory subunit of protein phosphatase 1. This Dictyostelium discoideum (Social amoeba) protein is Protein phosphatase 1 regulatory subunit pprA (pprA).